An 819-amino-acid polypeptide reads, in one-letter code: MADVLSRFNSGKLWDFKGGIHPPEMKSQSNSQPLRHLPLGTDFYIPLKQHLGTTGNLLIKEGDYVLKGQALTKGDGLRMLPVHAPTSGTIKSIKPYVATHPSGLDEPTIHLQADGLDQWIERNPIDDFSTLSSEQLIHKIYQAGIAGLGGAVFPTAAKIQSAEQKVKLLIINGAECEPYITCDDRLMRERADEIIKGIRILRYILHPEKVVIAIEDNKPEAISAIRNALQGANDISIRVIPTKYPSGATKQLIYLLTGIEVPSGERSSSIGVLMQNVGTMFAIKRAIINDEPLIERVVTLTGNKIAEKGNYWVRLGTPISQILSDAGYQFDKHFPIFAGGPMMGLELPNLNAPVTKLVNCLLAPDYLEYAEPEAEQACIRCSSCSDACPVNLMPQQLYWFARSEDHKKSEEYALKDCIECGICAYVCPSHIPLIQYFRQEKAKIWQIKEKQKKSDEAKIRFEAKQARMEREEQERKARSQRAAQARREELAQTKGEDPVKAALERLKAKKANETESTQIKTLTSEKGEVLPDNTDLMAQRKARRLARQQAASQVENQEQQTQPTNAKKAAVAAALARAKAKKLAQANSTSEAISNSQTAENQVEKTKSAVEKTQENSTALDPKKAAVAAAIARAKAKKLAQTNSTSEAISNSQTAENEVEKTKSAVEKTEENSTALDAKKAAIAAAIARAKAKKLAQANSASEAISNSQTAENEVEKTKSAVEKTQQNSTALDPKKAAVAAAIARAKAKKLAQANSTSEAISNSQTAENEVEKTKSAVEKTQENSTALDPKKAAVAAAIARAKAKKLAKTQATLENNQE.

4Fe-4S ferredoxin-type domains follow at residues 368–398 (EYAEPEAEQACIRCSSCSDACPVNLMPQQLY) and 408–437 (KSEEYALKDCIECGICAYVCPSHIPLIQYF). Positions 378, 381, 384, 388, 417, 420, 423, and 427 each coordinate [4Fe-4S] cluster. Composition is skewed to basic and acidic residues over residues 465 to 477 (QARMEREEQERKA) and 485 to 513 (ARREELAQTKGEDPVKAALERLKAKKANE). Disordered stretches follow at residues 465-568 (QARM…NAKK), 580-677 (AKKL…TALD), and 692-793 (AKKL…PKKA). 2 stretches are compositionally biased toward polar residues: residues 554–565 (VENQEQQTQPTN) and 587–601 (NSTSEAISNSQTAEN). Residues 602 to 614 (QVEKTKSAVEKTQ) are compositionally biased toward basic and acidic residues. Over residues 641 to 656 (QTNSTSEAISNSQTAE) the composition is skewed to polar residues. The span at 658 to 671 (EVEKTKSAVEKTEE) shows a compositional bias: basic and acidic residues. Composition is skewed to polar residues over residues 699-712 (NSASEAISNSQTAE) and 755-768 (NSTSEAISNSQTAE). Over residues 770–782 (EVEKTKSAVEKTQ) the composition is skewed to basic and acidic residues.

It belongs to the 4Fe4S bacterial-type ferredoxin family. RnfC subfamily. In terms of assembly, the complex is composed of six subunits: RnfA, RnfB, RnfC, RnfD, RnfE and RnfG. [4Fe-4S] cluster is required as a cofactor.

The protein localises to the cell inner membrane. In terms of biological role, part of a membrane-bound complex that couples electron transfer with translocation of ions across the membrane. In Haemophilus influenzae (strain ATCC 51907 / DSM 11121 / KW20 / Rd), this protein is Ion-translocating oxidoreductase complex subunit C.